We begin with the raw amino-acid sequence, 160 residues long: Fimbrial protein (160 aa).

A propeptide spans 1 to 7 (MKSLQKG) (leader sequence). The residue at position 8 (Phe-8) is an N-methylphenylalanine. A helical transmembrane segment spans residues 8-28 (FTLIELMIVVAIIGILAAFAI).

Belongs to the N-Me-Phe pilin family. As to quaternary structure, the pili are polar flexible filaments of about 5.4 nanometers diameter and 2.5 micrometers average length; they consist of only a single polypeptide chain arranged in a helical configuration of five subunits per turn in the assembled pilus.

Its subcellular location is the fimbrium. It is found in the membrane. The protein is Fimbrial protein (fimA) of Dichelobacter nodosus (Bacteroides nodosus).